A 942-amino-acid polypeptide reads, in one-letter code: Calcium-activated chloride channel regulator 2 (942 aa).

Positions 1–32 (MTHRDSTGPVIGLKLVTLLFTLSPELLFLGAG) are cleaved as a signal peptide. Residues 33-905 (LKLKENGYDG…SRDDLILKGV (873 aa)) are Extracellular-facing. Residues 54–205 (DLKLITNIKE…CSSDITGVFV (152 aa)) form a metalloprotease domain region. 2 N-linked (GlcNAc...) asparagine glycosylation sites follow: Asn-74 and Asn-97. Zn(2+) is bound at residue His-164. The active site involves Glu-165. Residues His-168 and Asp-175 each contribute to the Zn(2+) site. Asn-231, Asn-235, Asn-254, and Asn-286 each carry an N-linked (GlcNAc...) asparagine glycan. In terms of domain architecture, VWFA spans 311–483 (VVCLVIDVSR…NGMTEAFVRI (173 aa)). N-linked (GlcNAc...) asparagine glycans are attached at residues Asn-522, Asn-580, Asn-637, and Asn-821. Residues 906-926 (LTTVGLIAILCLIMVVAHCIF) traverse the membrane as a helical segment. The Cytoplasmic segment spans residues 927 to 942 (NRKKRPSRKENETKFL).

This sequence belongs to the CLCR family. Post-translationally, the translation product is autoproteolytically cleaved by the metalloprotease domain in the endoplasmic reticulum into a N-terminal and a C-terminal products that remain physically associated with each other. The cleavage is necessary for calcium-activated chloride channel (CaCC) activation activity. N-glycosylated. As to expression, highly expressed in eye, spleen, lung, kidney, uterus, and endothelial cells. Weakly expressed in heart and throughout the gastrointestinal tract. Highly expressed in mammary cell lines. Its expression in immortalized cell line HC11 correlates with slow or arrested growth. Re-expression in mammary tumor cells reduces colony survival.

The protein resides in the cell membrane. Its subcellular location is the basal cell membrane. It localises to the cell junction. Functionally, plays a role in modulating chloride current across the plasma membrane in a calcium-dependent manner, and cell adhesion. Involved in basal cell adhesion and/or stratification of squamous epithelia. May act as a tumor suppressor in breast and colorectal cancer. Plays a key role for cell adhesion in the beginning stages of lung metastasis via the binding to ITGB4. The sequence is that of Calcium-activated chloride channel regulator 2 (Clca2) from Mus musculus (Mouse).